Consider the following 1018-residue polypeptide: Ubiquitin carboxyl-terminal hydrolase 35 (1018 aa).

The region spanning 441–926 is the USP domain; it reads IGLINLGNTC…TAYVLFYRQR (486 aa). The active-site Nucleophile is the C450. Disordered stretches follow at residues 544-566 and 610-757; these read QKLKQSSSPSPPEEPPAPSSTSV and RLGS…GSEG. Pro residues predominate over residues 552–561; it reads PSPPEEPPAP. Position 613 is a phosphoserine (S613). 3 stretches are compositionally biased toward basic and acidic residues: residues 673–691, 699–709, and 718–728; these read QEERIEREEEGKEERTEKE, STRGEGEREKE, and KVEKETEKEAE. Residue H862 is the Proton acceptor of the active site. The tract at residues 984–1011 is disordered; that stretch reads HWGRGFDEDKDEDEGSPGGCNPAGGNGG. The segment covering 999–1011 has biased composition (gly residues); that stretch reads SPGGCNPAGGNGG.

It belongs to the peptidase C19 family. In terms of assembly, homodimer (via C-terminal region). Interacts with HSP90AA1. In terms of processing, ubiquitinated by CHIP/STUB1 in an HSP90-dependent manner; leading to proteasomal degradation. This ubiquitination can be reversed through auto-deubiquitinating activity. As to expression, expressed in testis, pancreas and skeletal muscle.

The protein localises to the cytoplasm. Its subcellular location is the mitochondrion. It carries out the reaction Thiol-dependent hydrolysis of ester, thioester, amide, peptide and isopeptide bonds formed by the C-terminal Gly of ubiquitin (a 76-residue protein attached to proteins as an intracellular targeting signal).. In terms of biological role, deubiquitinase that plays a role in different processes including cell cycle regulation, mitophagy or endoplasmic reticulum stress. Inhibits TNFalpha-induced NF-kappa-B activation through stabilizing TNIP2 protein via deubiquitination. Plays an essential role during mitosis by deubiquitinating and thereby regulating the levels of Aurora B/AURKB protein. In addition, regulates the protein levels of other key component of the chromosomal passenger complex (CPC) such as survivin/BIRC5 or Borealin/CDCA8 by enhancing their stability. Regulates the degradation of mitochondria through the process of autophagy termed mitophagy. The protein is Ubiquitin carboxyl-terminal hydrolase 35 (USP35) of Homo sapiens (Human).